We begin with the raw amino-acid sequence, 255 residues long: Indole-3-glycerol phosphate synthase (255 aa).

It belongs to the TrpC family.

It carries out the reaction 1-(2-carboxyphenylamino)-1-deoxy-D-ribulose 5-phosphate + H(+) = (1S,2R)-1-C-(indol-3-yl)glycerol 3-phosphate + CO2 + H2O. Its pathway is amino-acid biosynthesis; L-tryptophan biosynthesis; L-tryptophan from chorismate: step 4/5. The chain is Indole-3-glycerol phosphate synthase from Streptococcus pneumoniae (strain Taiwan19F-14).